A 333-amino-acid polypeptide reads, in one-letter code: Protein FAM170A (333 aa).

3 disordered regions span residues 1–45 (MKRR…GVGE), 73–107 (LQDSSKPRSPLDQVPEGEATTAPSQQASSSCPSYK), and 143–214 (ETSE…AKTP). Residues 10 to 29 (LEIEESKEAGISKSQEDISH) are compositionally biased toward basic and acidic residues. The segment covering 92 to 105 (TTAPSQQASSSCPS) has biased composition (low complexity). Basic and acidic residues predominate over residues 143-156 (ETSESLEKQPRMEE). Residues 170–179 (SDVSTRNLLS) show a composition bias toward polar residues. A compositionally biased stretch (basic and acidic residues) spans 185–196 (GEEKEHEEKPES). Phosphothreonine is present on T213. Residues 224 to 248 (FRCMACCRVFATMESLQEHVQYGIR) form a C2H2-type; degenerate zinc finger. The tract at residues 267–333 (MESESTQEEE…RKDHCDNSGS (67 aa)) is disordered. Acidic residues predominate over residues 271–281 (STQEEEEDHTE). The span at 282–293 (ETEKPKEEKAEE) shows a compositional bias: basic and acidic residues. At S308 the chain carries Phosphoserine.

This sequence belongs to the FAM170 family. As to expression, testis-specific.

The protein localises to the nucleus. In terms of biological role, acts as a nuclear transcription factor that positively regulates the expression of heat shock genes. Binds to heat shock promoter elements (HSE). The sequence is that of Protein FAM170A (Fam170a) from Mus musculus (Mouse).